The chain runs to 114 residues: Large ribosomal subunit protein uL22 (114 aa).

The protein belongs to the universal ribosomal protein uL22 family. As to quaternary structure, part of the 50S ribosomal subunit.

In terms of biological role, this protein binds specifically to 23S rRNA; its binding is stimulated by other ribosomal proteins, e.g. L4, L17, and L20. It is important during the early stages of 50S assembly. It makes multiple contacts with different domains of the 23S rRNA in the assembled 50S subunit and ribosome. The globular domain of the protein is located near the polypeptide exit tunnel on the outside of the subunit, while an extended beta-hairpin is found that lines the wall of the exit tunnel in the center of the 70S ribosome. The polypeptide is Large ribosomal subunit protein uL22 (Desulfosudis oleivorans (strain DSM 6200 / JCM 39069 / Hxd3) (Desulfococcus oleovorans)).